Reading from the N-terminus, the 908-residue chain is MRIGLLWLVPLFTLTEGTDGFLQQKNDGRRTKEIVSMVEERHPVHEYEVLLQVTYRDPEEKRELKRFLKLLKSPSPSLRGPSKIIRVKATTYCRSRKGFLECACEDSYTWFPPSCLDPQNCCLHTTGPVPSCNCSLRGLRQSINFCERAKVWGTFEIDEKFPEDLWNSSSDVYAHYTVGIENQLKEAYRRVHGFESVRVTQFRKGSIVVGYEVTGSTSPPELLFAIEQEAEKAQEALRRQFPVKYGSFRVFGKAPCNSISFGFGSENDEYTVPCSSGFTGSMTVRCQSSGWQITRESCVLSQLEELKKELRMIAGKITEAGVASLVQNLSTILLQSPSTTVGNLGSVVSLLSNISSLSLANSLTVSNLTLMNVINIADHILDSASITNWTILLQDAKDASSQLLKTLESISSLIPSMALPLNFSGKFIDWKGTPVTQIQSTRGYNYQMEMRQNASLPIRGHVFIEPDQFQKSHPKTIISMASLTFGDILPITQRGNAWVNGPVISTLIQNYSISEIFLNFSKIKGNLTQPRCVFWDFSQLQWSNAGCQLVNETLDTVLCRCSHLTSFSMLMSPFVPSSVVPVVKWITYIGLSISIASLILCLIIESLFWKQTKRSQTSYTRNICLVNIAVSLLIADVWFIIAATVDPSVSPSGVCVAAVFFTHFFYLAVFFWMLVLGILLAYRIILVFHHMALTTMMAIGFCLGYGCPLLISIITLAVTQPSNSYKRNDVCWLNWSDKSKPLLAFVVPALTIVAVNLVVVLLVLRKLWRPAVGERLNQDDKATAIRMGKSLLVLTPLLGLTWGFGIGTMANSHNLAWHVLFALLNAFQGFFIFCFGILLDTKLRQLLSNKLTTLSSWKQTSKRNASDTVTQPKCLRTFNILQHRGMYALSHTGDSSSDITLTQFLSTE.

The N-terminal stretch at Met-1 to Gly-20 is a signal peptide. Residues Phe-21–Tyr-588 lie on the Extracellular side of the membrane. 12 N-linked (GlcNAc...) asparagine glycosylation sites follow: Asn-133, Asn-167, Asn-328, Asn-353, Asn-367, Asn-388, Asn-422, Asn-453, Asn-510, Asn-519, Asn-526, and Asn-551. The SEA domain maps to Glu-147–Pro-255. The 144-residue stretch at Pro-434–Ser-577 folds into the GAIN-B domain. 2 disulfide bridges follow: Cys-532–Cys-559 and Cys-547–Cys-561. A GPS region spans residues Cys-532–Ser-577. The segment at Ser-566–Phe-574 is stachel. Residues Ile-589–Trp-609 form a helical membrane-spanning segment. The Cytoplasmic segment spans residues Lys-610 to Asn-622. Residues Ile-623 to Ala-643 form a helical membrane-spanning segment. Topologically, residues Thr-644–Ala-658 are extracellular. Cys-655 and Cys-731 are disulfide-bonded. A helical membrane pass occupies residues Val-659–Leu-679. Over Leu-680–Met-697 the chain is Cytoplasmic. Residues Ala-698–Val-718 traverse the membrane as a helical segment. At Thr-719–Leu-742 the chain is on the extracellular side. Asn-734 carries N-linked (GlcNAc...) asparagine glycosylation. A helical membrane pass occupies residues Leu-743–Val-763. Residues Leu-764–Lys-789 lie on the Cytoplasmic side of the membrane. The chain crosses the membrane as a helical span at residues Ser-790–Ala-810. Over Asn-811 to His-818 the chain is Extracellular. The chain crosses the membrane as a helical span at residues Val-819–Leu-839. Residues Asp-840 to Glu-908 lie on the Cytoplasmic side of the membrane.

The protein belongs to the G-protein coupled receptor 2 family. Adhesion G-protein coupled receptor (ADGR) subfamily. Heterodimer of 2 chains generated by proteolytic processing; the large extracellular N-terminal fragment and the membrane-bound C-terminal fragment predominantly remain associated and non-covalently linked. Post-translationally, autoproteolytically processed at the GPS region of the GAIN-B domain; this cleavage modulates receptor activity. Expressed in liver, kidney and adrenal gland. In kidney strong expression in the renal pelvis and the ureter.

It is found in the cell membrane. Its activity is regulated as follows. Forms a heterodimer of 2 chains generated by proteolytic processing that remain associated through non-covalent interactions mediated by the GAIN-B domain. In the inactivated receptor, the Stachel sequence (also named stalk) is embedded in the GAIN-B domain, where it adopts a beta-strand conformation. On activation, the Stachel moves into the 7 transmembrane region and adopts a twisted hook-shaped configuration that forms contacts within the receptor, leading to coupling of a G-alpha protein, which activates signaling. The cleaved GAIN-B and N-terminal domains can then dissociate from the rest of the receptor. In terms of biological role, adhesion G-protein coupled receptor (aGPCR) for N-docosahexaenoylethanolamine (synaptamide), an omega-3 fatty acid lipid highly enriched in the brain. Ligand binding causes a conformation change that triggers signaling via guanine nucleotide-binding proteins (G proteins) and modulates the activity of downstream effectors, such as adenylate cyclase. ADGRF1 is coupled to G(s) G proteins and mediates activation of adenylate cyclase activity. Also able to couple to G(q), G(i) and G(12)/G(13) G proteins; additional evidence is however required to confirm this result in vivo. Involved in the development of neurons and cognitive function. In liver, involved in fat accumulation. The chain is Adhesion G-protein coupled receptor F1 from Mus musculus (Mouse).